Reading from the N-terminus, the 118-residue chain is NAD(P)H-quinone oxidoreductase subunit M (118 aa).

The protein belongs to the complex I NdhM subunit family. NDH-1 can be composed of about 15 different subunits; different subcomplexes with different compositions have been identified which probably have different functions.

Its subcellular location is the cellular thylakoid membrane. The catalysed reaction is a plastoquinone + NADH + (n+1) H(+)(in) = a plastoquinol + NAD(+) + n H(+)(out). The enzyme catalyses a plastoquinone + NADPH + (n+1) H(+)(in) = a plastoquinol + NADP(+) + n H(+)(out). In terms of biological role, NDH-1 shuttles electrons from an unknown electron donor, via FMN and iron-sulfur (Fe-S) centers, to quinones in the respiratory and/or the photosynthetic chain. The immediate electron acceptor for the enzyme in this species is believed to be plastoquinone. Couples the redox reaction to proton translocation, and thus conserves the redox energy in a proton gradient. Cyanobacterial NDH-1 also plays a role in inorganic carbon-concentration. This Rippkaea orientalis (strain PCC 8801 / RF-1) (Cyanothece sp. (strain PCC 8801)) protein is NAD(P)H-quinone oxidoreductase subunit M.